We begin with the raw amino-acid sequence, 443 residues long: Serine transporter (443 aa).

11 helical membrane passes run 38-60 (TGWVIMSIGMAIGAGIVFLPVQV), 65-87 (LWVFLLSSVIGYPAMYLFQRLFI), 111-131 (WGILLGALYFVMLVIWMFVYS), 150-170 (GLLSDSPFYGLVLICILVAIS), 183-203 (GMVLTKLLVVAALGVSMVGMW), 215-235 (GLLVKNAIITLPFTLTSILFI), 265-285 (IAFGILFIIVFFYAVSFTLAM), 319-339 (VSVILNIFAVMTAFFGVYLGF), 368-388 (GIMIFAILLAWSAIVLNAPVL), 390-410 (FTSICSPIFGLVGCLIPAWLV), and 422-442 (MSLYLIIVTGLLLCVSPFLAF).

The protein belongs to the amino acid/polyamine transporter 2 family. SdaC/TdcC subfamily.

The protein resides in the cell inner membrane. In terms of biological role, transports both D- and L-serine; allows growth of strain CFT073 cells normally unable to transport D-serine on that substrate. Transport relies on the H(+) gradient and is not competed by L-threonine. May play a role in L-cysteine detoxification. This chain is Serine transporter, found in Escherichia coli O157:H7.